We begin with the raw amino-acid sequence, 320 residues long: Methionine import ATP-binding protein MetN (320 aa).

Residues 2–237 enclose the ABC transporter domain; the sequence is IEIKNVSKYF…PSSEMKKLIG (236 aa). ATP is bound at residue 34 to 41; it reads GHSGAGKS.

This sequence belongs to the ABC transporter superfamily. Methionine importer (TC 3.A.1.24) family. In terms of assembly, the complex is composed of two ATP-binding proteins (MetN), two transmembrane proteins (MetI) and a solute-binding protein (MetQ).

Its subcellular location is the cell membrane. It carries out the reaction L-methionine(out) + ATP + H2O = L-methionine(in) + ADP + phosphate + H(+). The enzyme catalyses D-methionine(out) + ATP + H2O = D-methionine(in) + ADP + phosphate + H(+). In terms of biological role, part of the ABC transporter complex MetNIQ involved in methionine import. Responsible for energy coupling to the transport system. The polypeptide is Methionine import ATP-binding protein MetN (Clostridium acetobutylicum (strain ATCC 824 / DSM 792 / JCM 1419 / IAM 19013 / LMG 5710 / NBRC 13948 / NRRL B-527 / VKM B-1787 / 2291 / W)).